A 473-amino-acid polypeptide reads, in one-letter code: Presenilin-B (473 aa).

The interval 1-141 (MSSDNNNDPF…PLLNKKEKDD (141 aa)) is disordered. Topologically, residues 1 to 164 (MSSDNNNDPF…DDEVSLQDFS (164 aa)) are cytoplasmic. Residues 22–46 (RVSTTTSPNRQSINSSPKQSSPKST) are compositionally biased toward polar residues. The span at 54–72 (NIILDLNDNNNDNNNTNNY) shows a compositional bias: low complexity. The segment covering 79-89 (VDNKNKFENKD) has biased composition (basic and acidic residues). Residues 165–185 (SMIVSIIIPVSITMMAVVFFV) form a helical membrane-spanning segment. At 186–224 (KYLNNQTLYASTLSYTIAGGSSGGGSGADSITGNSFVDS) the chain is on the lumenal side. Asn190 carries an N-linked (GlcNAc...) asparagine glycan. Residues 225–245 (LIVAGIVLGMIIVTTVAFVLL) form a helical membrane-spanning segment. Over 246–252 (YKYRCLK) the chain is Cytoplasmic. The helical transmembrane segment at 253–273 (ILYGWLFLSVGMMLGSFGTTF) threads the bilayer. The Lumenal segment spans residues 274-286 (FQAMLSAANLPLD). The chain crosses the membrane as a helical span at residues 287 to 307 (YITFAFLIFNFTVCGIIGVFW). Position 308 (Tyr308) is a topological domain, cytoplasmic. A helical membrane pass occupies residues 309–329 (AHQYVNQLYLVIISVLMAISL). Residues 330-334 (TRLPQ) are Lumenal-facing. The chain crosses the membrane as a helical span at residues 335–355 (WTIFTLLVIVAIYDLFAVLCP). The active site involves Asp348. At 356–389 (RGPLKVLVELSQERNENIPALVYETGKGSDSNLK) the chain is on the cytoplasmic side. The chain crosses the membrane as a helical span at residues 390-410 (LGLGDFIFYSLLISRAALVHM). Residue Asp394 is part of the active site. The Lumenal segment spans residues 411 to 413 (SCV). The helical transmembrane segment at 414–434 (FSTFIAILTGLFLTLLCLAIF) threads the bilayer. Residues 435-442 (KKALPALP) are Cytoplasmic-facing. Residues 439 to 441 (PAL) carry the PAL motif. An intramembrane region (helical) is located at residues 443–463 (ISIFLGILFYYLSNNFLTPFI). At 464 to 473 (EALTLSQIFV) the chain is on the cytoplasmic side.

Belongs to the peptidase A22A family. In terms of assembly, homodimer. Component of the gamma-secretase complex, a complex composed of a presenilin homodimer, nicastrin, aph1 and pen2.

It is found in the endoplasmic reticulum membrane. Its subcellular location is the golgi apparatus membrane. Its function is as follows. Probable catalytic subunit of the gamma-secretase complex, an endoprotease complex that catalyzes the intramembrane cleavage of integral membrane proteins such as Notch receptors. Requires the other members of the gamma-secretase complex to have a protease activity. The protein is Presenilin-B (psenB) of Dictyostelium discoideum (Social amoeba).